The primary structure comprises 337 residues: MTQQLKLGYKASAEQFGPRELVELAVLAEKHGMDSATVSDHFQPWRHNGGHAPFSLSWMTAVGERTKRLQLGTSVLTPTFRYNPAVIAQAFATMGCLYPGRIMLGAGTGEALNEIATGYTGQWPEFRERYARLRESVQLMRDLWTGERTDFKGEYYSTTGASIYDVPECGIPVYIAAGGPVVARYAGRAGDGFICTSGKGMELYTDKLMPAVSEGATKAERDVTSIDKMIEIKISYDTDPEAALENTRFWAPLSLTQEQKHSIEDPIEMEAAADALPIEQVAKRWIVSSDPDDAVAQVKQYIDAGLNHLVFHAPGHDQKRFLELFDRDLAPRLRALG.

Residue D40 coordinates coenzyme F420-(gamma-Glu)n. H41 acts as the Proton donor in catalysis. Coenzyme F420-(gamma-Glu)n is bound by residues T77 and 108–109 (TG). E110 functions as the Proton acceptor in the catalytic mechanism. Residues N113, 178 to 179 (GG), and 181 to 182 (VV) contribute to the coenzyme F420-(gamma-Glu)n site. Substrate contacts are provided by T196, K199, K260, and R284.

It belongs to the F420-dependent glucose-6-phosphate dehydrogenase family. In terms of assembly, homodimer.

It catalyses the reaction oxidized coenzyme F420-(gamma-L-Glu)(n) + D-glucose 6-phosphate + H(+) = 6-phospho-D-glucono-1,5-lactone + reduced coenzyme F420-(gamma-L-Glu)(n). Functionally, catalyzes the coenzyme F420-dependent oxidation of glucose 6-phosphate (G6P) to 6-phosphogluconolactone. This is F420-dependent glucose-6-phosphate dehydrogenase 2 from Rhodococcus jostii (strain RHA1).